Reading from the N-terminus, the 542-residue chain is CTP synthase (542 aa).

The interval 1-265 (MTRYVFITGG…DREILAHFQM (265 aa)) is amidoligase domain. Ser-13 contacts CTP. A UTP-binding site is contributed by Ser-13. Residues 14 to 19 (SLGKGL) and Asp-71 each bind ATP. 2 residues coordinate Mg(2+): Asp-71 and Glu-139. CTP is bound by residues 146–148 (DIE), 186–191 (KTKPTQ), and Lys-222. UTP contacts are provided by residues 186–191 (KTKPTQ) and Lys-222. 238–240 (RDV) lines the ATP pocket. Residues 291 to 541 (TIAIVGKYTG…IAAAIDQSRL (251 aa)) enclose the Glutamine amidotransferase type-1 domain. Gly-353 contacts L-glutamine. Cys-380 acts as the Nucleophile; for glutamine hydrolysis in catalysis. L-glutamine contacts are provided by residues 381-384 (FGMQ), Glu-404, and Arg-469. Active-site residues include His-514 and Glu-516.

It belongs to the CTP synthase family. As to quaternary structure, homotetramer.

The enzyme catalyses UTP + L-glutamine + ATP + H2O = CTP + L-glutamate + ADP + phosphate + 2 H(+). It catalyses the reaction L-glutamine + H2O = L-glutamate + NH4(+). It carries out the reaction UTP + NH4(+) + ATP = CTP + ADP + phosphate + 2 H(+). It functions in the pathway pyrimidine metabolism; CTP biosynthesis via de novo pathway; CTP from UDP: step 2/2. Allosterically activated by GTP, when glutamine is the substrate; GTP has no effect on the reaction when ammonia is the substrate. The allosteric effector GTP functions by stabilizing the protein conformation that binds the tetrahedral intermediate(s) formed during glutamine hydrolysis. Inhibited by the product CTP, via allosteric rather than competitive inhibition. Its function is as follows. Catalyzes the ATP-dependent amination of UTP to CTP with either L-glutamine or ammonia as the source of nitrogen. Regulates intracellular CTP levels through interactions with the four ribonucleotide triphosphates. The protein is CTP synthase of Methylorubrum extorquens (strain CM4 / NCIMB 13688) (Methylobacterium extorquens).